The sequence spans 555 residues: Esterase-5A (555 aa).

Residues 1–19 form the signal peptide; it reads MHLVRWLICLIQLWIQLGA. Cys87 and Cys106 are disulfide-bonded. N-linked (GlcNAc...) asparagine glycans are attached at residues Asn95 and Asn116. Ser210 acts as the Acyl-ester intermediate in catalysis. The cysteines at positions 262 and 274 are disulfide-linked. Asn479 and Asn510 each carry an N-linked (GlcNAc...) asparagine glycan. Cys518 and Cys539 are joined by a disulfide.

Belongs to the type-B carboxylesterase/lipase family.

It localises to the secreted. It carries out the reaction a carboxylic ester + H2O = an alcohol + a carboxylate + H(+). This is Esterase-5A (Est-5A) from Drosophila miranda (Fruit fly).